The sequence spans 465 residues: GTPase Der (465 aa).

EngA-type G domains are found at residues 3 to 167 and 179 to 352; these read PLVA…PEEG and IRIA…ESAN. GTP-binding positions include 9 to 16, 57 to 61, 119 to 122, 185 to 192, 232 to 236, and 297 to 300; these read GRPNVGKS, DTGGI, NKID, DTAGL, and NKWD. A KH-like domain is found at 353 to 437; sequence KTFTTSEVNK…PVSFIFREGT (85 aa).

This sequence belongs to the TRAFAC class TrmE-Era-EngA-EngB-Septin-like GTPase superfamily. EngA (Der) GTPase family. Associates with the 50S ribosomal subunit.

Its function is as follows. GTPase that plays an essential role in the late steps of ribosome biogenesis. The sequence is that of GTPase Der from Stenotrophomonas maltophilia (strain R551-3).